A 71-amino-acid polypeptide reads, in one-letter code: Small ribosomal subunit protein bS21 (71 aa).

The protein belongs to the bacterial ribosomal protein bS21 family.

The chain is Small ribosomal subunit protein bS21 from Alteromonas mediterranea (strain DSM 17117 / CIP 110805 / LMG 28347 / Deep ecotype).